A 284-amino-acid chain; its full sequence is Shikimate dehydrogenase (NADP(+)) (284 aa).

Shikimate-binding positions include 20–22 (SIS) and Ser-67. Lys-71 functions as the Proton acceptor in the catalytic mechanism. Asp-83 contacts NADP(+). The shikimate site is built by Asn-92 and Asp-107. NADP(+) contacts are provided by residues 129–133 (GAGGA) and Ile-227. Residue Tyr-229 coordinates shikimate. Gly-250 contributes to the NADP(+) binding site.

Belongs to the shikimate dehydrogenase family. In terms of assembly, homodimer.

The catalysed reaction is shikimate + NADP(+) = 3-dehydroshikimate + NADPH + H(+). It functions in the pathway metabolic intermediate biosynthesis; chorismate biosynthesis; chorismate from D-erythrose 4-phosphate and phosphoenolpyruvate: step 4/7. Involved in the biosynthesis of the chorismate, which leads to the biosynthesis of aromatic amino acids. Catalyzes the reversible NADPH linked reduction of 3-dehydroshikimate (DHSA) to yield shikimate (SA). The polypeptide is Shikimate dehydrogenase (NADP(+)) (Streptococcus pneumoniae (strain P1031)).